Here is a 336-residue protein sequence, read N- to C-terminus: tRNA N6-adenosine threonylcarbamoyltransferase (336 aa).

His115, His119, and Tyr136 together coordinate Fe cation. Residues 136–140, Asp168, Glu185, and Ser266 each bind substrate; that span reads YVAGG. Residue Asp294 participates in Fe cation binding.

The protein belongs to the KAE1 / TsaD family. It depends on Fe(2+) as a cofactor.

It is found in the cytoplasm. The catalysed reaction is L-threonylcarbamoyladenylate + adenosine(37) in tRNA = N(6)-L-threonylcarbamoyladenosine(37) in tRNA + AMP + H(+). In terms of biological role, required for the formation of a threonylcarbamoyl group on adenosine at position 37 (t(6)A37) in tRNAs that read codons beginning with adenine. Is probably involved in the transfer of the threonylcarbamoyl moiety of threonylcarbamoyl-AMP (TC-AMP) to the N6 group of A37. The sequence is that of tRNA N6-adenosine threonylcarbamoyltransferase from Thermofilum pendens (strain DSM 2475 / Hrk 5).